The chain runs to 581 residues: A-type ATP synthase subunit A (581 aa).

234-241 (GPFGSGKT) is an ATP binding site.

The protein belongs to the ATPase alpha/beta chains family. Has multiple subunits with at least A(3), B(3), C, D, E, F, H, I and proteolipid K(x).

The protein resides in the cell membrane. The enzyme catalyses ATP + H2O + 4 H(+)(in) = ADP + phosphate + 5 H(+)(out). Functionally, component of the A-type ATP synthase that produces ATP from ADP in the presence of a proton gradient across the membrane. The A chain is the catalytic subunit. This chain is A-type ATP synthase subunit A, found in Archaeoglobus fulgidus (strain ATCC 49558 / DSM 4304 / JCM 9628 / NBRC 100126 / VC-16).